A 93-amino-acid polypeptide reads, in one-letter code: Protein IDA-LIKE 4 (93 aa).

Positions 1–35 (MYPTRPHYWRRRLSINRPQAFLLLILCLFFIHHCD) are cleaved as a signal peptide.

As to expression, expressed in mainly in buds. Lower levels in roots. Detected at the base of pedicel, in the floral and funicule abscission zones, in vascular tissues, in guard cells of young seedlings and in hydathodes.

Its subcellular location is the secreted. The protein localises to the extracellular space. May be involved in floral abscission. The sequence is that of Protein IDA-LIKE 4 (IDL4) from Arabidopsis thaliana (Mouse-ear cress).